A 979-amino-acid polypeptide reads, in one-letter code: UPF0182 protein Rv0064 (979 aa).

7 helical membrane-spanning segments follow: residues 19–41 (LVTA…DIYV), 63–85 (LAIV…LLAY), 114–136 (LFGW…FDWV), 174–196 (WLFV…FGGL), 208–230 (AARV…AYWL), 261–280 (LVLV…AIFL), and 285–307 (IPAM…WPLL). The interval 898–948 (GTGRVATARGGDAASAPPPGAGGPAPPQAVPPPRTTQPPAAPPRGPDVPPA) is disordered. A compositionally biased stretch (pro residues) spans 913–946 (APPPGAGGPAPPQAVPPPRTTQPPAAPPRGPDVP).

This sequence belongs to the UPF0182 family.

The protein localises to the cell membrane. This chain is UPF0182 protein Rv0064, found in Mycobacterium tuberculosis (strain ATCC 25618 / H37Rv).